A 399-amino-acid polypeptide reads, in one-letter code: Bombesin receptor subtype-3 (399 aa).

Topologically, residues 1–41 (MSQRQSQSPNQTLISITNDTETSSSVVSNDTTHKGWTGDNS) are extracellular. Residues Asn-10, Asn-18, and Asn-29 are each glycosylated (N-linked (GlcNAc...) asparagine). The helical transmembrane segment at 42–63 (PGIEALCAIYITYAGIISVGIL) threads the bilayer. At 64–82 (GNAILIKVFFKTKSMQTVP) the chain is on the cytoplasmic side. The chain crosses the membrane as a helical span at residues 83–103 (NIFITSLAFGDLLLLLTCVPV). Over 104-121 (DATHYLAEGWLFGKVGCK) the chain is Extracellular. A disulfide bridge connects residues Cys-120 and Cys-203. A helical transmembrane segment spans residues 122–143 (VLSFIRLTSVGVSVFTLTILSA). The Cytoplasmic portion of the chain corresponds to 144–163 (DRYKAVVKPLERQPPNAILK). The chain crosses the membrane as a helical span at residues 164 to 184 (TCAKAGGIWIVSMIFALPEAI). Residues 185 to 220 (FSNVYTFQDPNRNVTFESCNSYPISERLLQEIHSLL) are Extracellular-facing. Residues 221–241 (CFLVFYIIPLSIISVYYSLIA) traverse the membrane as a helical segment. At 242-272 (RTLYKSTLNIPTEEQSHARKQIESRKRIAKT) the chain is on the cytoplasmic side. The helical transmembrane segment at 273–293 (VLVLVALFALCWLPNHLLYLY) threads the bilayer. Topologically, residues 294 to 313 (HSFTYESYANHSDVPFVIII) are extracellular. Residues 314-333 (FSRVLAFSNSCVNPFALYWL) form a helical membrane-spanning segment. Residues 334–399 (SKTFQQHFKA…SSAKKGEDKV (66 aa)) are Cytoplasmic-facing. The S-palmitoyl cysteine moiety is linked to residue Cys-347.

It belongs to the G-protein coupled receptor 1 family. As to quaternary structure, interacts with C6orf89.

The protein localises to the cell membrane. In terms of biological role, role in sperm cell division, maturation, or function. This receptor mediates its action by association with G proteins that activate a phosphatidylinositol-calcium second messenger system. In Mus musculus (Mouse), this protein is Bombesin receptor subtype-3 (Brs3).